Reading from the N-terminus, the 66-residue chain is MSGNKSPFPDGRIPDRLPDGRPAVPWRSRWTEGVLPLWLVATAGGMAVLFVVGLFFYGSYTGVGSA.

The segment at 1–23 (MSGNKSPFPDGRIPDRLPDGRPA) is disordered. Residues 37 to 57 (LWLVATAGGMAVLFVVGLFFY) form a helical membrane-spanning segment.

This sequence belongs to the PsbJ family. In terms of assembly, PSII is composed of 1 copy each of membrane proteins PsbA, PsbB, PsbC, PsbD, PsbE, PsbF, PsbH, PsbI, PsbJ, PsbK, PsbL, PsbM, PsbT, PsbX, PsbY, PsbZ, Psb30/Ycf12, peripheral proteins PsbO, CyanoQ (PsbQ), PsbU, PsbV and a large number of cofactors. It forms dimeric complexes.

It is found in the cellular thylakoid membrane. Functionally, one of the components of the core complex of photosystem II (PSII). PSII is a light-driven water:plastoquinone oxidoreductase that uses light energy to abstract electrons from H(2)O, generating O(2) and a proton gradient subsequently used for ATP formation. It consists of a core antenna complex that captures photons, and an electron transfer chain that converts photonic excitation into a charge separation. In Parasynechococcus marenigrum (strain WH8102), this protein is Photosystem II reaction center protein J.